A 470-amino-acid polypeptide reads, in one-letter code: Pyruvate kinase I (470 aa).

Substrate is bound at residue Arg-32. K(+) is bound by residues Asn-34, Ser-36, Asp-66, and Thr-67. 34-37 (NFSH) lines the ATP pocket. Arg-73 contacts ATP. At Lys-76 the chain carries N6-acetyllysine. Lys-156 serves as a coordination point for ATP. Glu-222 is a Mg(2+) binding site. 3 residues coordinate substrate: Gly-245, Asp-246, and Thr-278. Asp-246 provides a ligand contact to Mg(2+). The residue at position 319 (Lys-319) is an N6-acetyllysine.

This sequence belongs to the pyruvate kinase family. In terms of assembly, homotetramer. It depends on Mg(2+) as a cofactor. K(+) serves as cofactor.

The catalysed reaction is pyruvate + ATP = phosphoenolpyruvate + ADP + H(+). Its pathway is carbohydrate degradation; glycolysis; pyruvate from D-glyceraldehyde 3-phosphate: step 5/5. This Escherichia coli O157:H7 protein is Pyruvate kinase I (pykF).